The sequence spans 328 residues: Beta-ketoacyl-[acyl-carrier-protein] synthase III (328 aa).

Catalysis depends on residues C113 and H253. The tract at residues 254–258 is ACP-binding; sequence QANLR. The active site involves N283.

The protein belongs to the thiolase-like superfamily. FabH family. In terms of assembly, homodimer.

The protein localises to the cytoplasm. The catalysed reaction is malonyl-[ACP] + acetyl-CoA + H(+) = 3-oxobutanoyl-[ACP] + CO2 + CoA. Its pathway is lipid metabolism; fatty acid biosynthesis. In terms of biological role, catalyzes the condensation reaction of fatty acid synthesis by the addition to an acyl acceptor of two carbons from malonyl-ACP. Catalyzes the first condensation reaction which initiates fatty acid synthesis and may therefore play a role in governing the total rate of fatty acid production. Possesses both acetoacetyl-ACP synthase and acetyl transacylase activities. Its substrate specificity determines the biosynthesis of branched-chain and/or straight-chain of fatty acids. This chain is Beta-ketoacyl-[acyl-carrier-protein] synthase III, found in Fusobacterium nucleatum subsp. nucleatum (strain ATCC 25586 / DSM 15643 / BCRC 10681 / CIP 101130 / JCM 8532 / KCTC 2640 / LMG 13131 / VPI 4355).